Reading from the N-terminus, the 403-residue chain is Large ribosomal subunit protein uL3 (403 aa).

Residues 1–38 form a disordered region; the sequence is MSHRKFSAPRHGSLGFLPRKRSSRHRGKVKSFPKDDSS. Serine 13 is modified (phosphoserine). The span at 18-31 shows a compositional bias: basic residues; sequence PRKRSSRHRGKVKS. A Glycyl lysine isopeptide (Lys-Gly) (interchain with G-Cter in SUMO2) cross-link involves residue lysine 39. Lysine 136 bears the N6-acetyllysine mark. Residues lysine 224 and lysine 226 each participate in a glycyl lysine isopeptide (Lys-Gly) (interchain with G-Cter in SUMO2) cross-link. A Tele-methylhistidine modification is found at histidine 245. Residues lysine 286 and lysine 294 each carry the N6-acetyllysine; alternate modification. A Glycyl lysine isopeptide (Lys-Gly) (interchain with G-Cter in SUMO2); alternate cross-link involves residue lysine 286. Lysine 294 participates in a covalent cross-link: Glycyl lysine isopeptide (Lys-Gly) (interchain with G-Cter in SUMO1); alternate. At serine 304 the chain carries Phosphoserine. The residue at position 366 (lysine 366) is an N6-acetyllysine; alternate. Lysine 366 participates in a covalent cross-link: Glycyl lysine isopeptide (Lys-Gly) (interchain with G-Cter in SUMO2); alternate. Lysine 373 is modified (N6-acetyllysine). Glycyl lysine isopeptide (Lys-Gly) (interchain with G-Cter in SUMO2) cross-links involve residues lysine 386, lysine 393, and lysine 399.

This sequence belongs to the universal ribosomal protein uL3 family. In terms of assembly, component of the large ribosomal subunit. Interacts with DHX33. Post-translationally, constitutively monomethylated at His-245 by METTL18. Methylation at His-245 regulates translation elongation by slowing ribosome traversal on tyrosine codons: slower elongation provides enough time for proper folding of synthesized proteins and prevents cellular aggregation of tyrosine-rich proteins It is not required for incorporation of RPL3 into ribosomes.

It is found in the nucleus. The protein localises to the nucleolus. Its subcellular location is the cytoplasm. In terms of biological role, component of the large ribosomal subunit. The ribosome is a large ribonucleoprotein complex responsible for the synthesis of proteins in the cell. The protein is Large ribosomal subunit protein uL3 (RPL3) of Sus scrofa (Pig).